The sequence spans 367 residues: Alanine racemase (367 aa).

Residue Lys-40 is the Proton acceptor; specific for D-alanine of the active site. Residue Lys-40 is modified to N6-(pyridoxal phosphate)lysine. Position 136 (Arg-136) interacts with substrate. The active-site Proton acceptor; specific for L-alanine is Tyr-263. Met-310 serves as a coordination point for substrate.

This sequence belongs to the alanine racemase family. The cofactor is pyridoxal 5'-phosphate.

It carries out the reaction L-alanine = D-alanine. It participates in amino-acid biosynthesis; D-alanine biosynthesis; D-alanine from L-alanine: step 1/1. Functionally, catalyzes the interconversion of L-alanine and D-alanine. May also act on other amino acids. This is Alanine racemase (alr) from Streptococcus pneumoniae (strain Taiwan19F-14).